Consider the following 386-residue polypeptide: Phosphoglycerate kinase (386 aa).

Residues Asp21 to Asn23, Arg36, His59 to Arg62, Arg113, and Arg146 each bind substrate. ATP-binding positions include Lys197, Glu313, and Gly339–Thr342.

The protein belongs to the phosphoglycerate kinase family. Monomer.

It localises to the cytoplasm. The catalysed reaction is (2R)-3-phosphoglycerate + ATP = (2R)-3-phospho-glyceroyl phosphate + ADP. It functions in the pathway carbohydrate degradation; glycolysis; pyruvate from D-glyceraldehyde 3-phosphate: step 2/5. This Serratia proteamaculans (strain 568) protein is Phosphoglycerate kinase.